Consider the following 321-residue polypeptide: MNDKDHFSSPAHITVLLNEAVAGLALKEKGIYIDGTFGRGGHSRLILSRLADNGRLIAIDRDPRAIAEAKTIQDPRFHIEHRSFSDIPRICERLNLVGKVDGILLDLGVSSPQLDEAERGFSFMKDGPLDMRMDTTQGLSASEWLQQVSEQDLAWVLKTFGEERFAKRIAQAIVNYNKQALQHGTEPLSRTLQLAELIANAVPFKDKHKHPATRSFQAIRIFINAELDELESVLKSAVQVLAPQGRLAIISFHSLEDRMVKHFMRKQSKGEDIPKGLPLRDDQIQRTQTLKVIGKAIMPTEQEQQQNPRSRSAVLRVAEKL.

Residues 40-42, Asp60, Phe84, Asp106, and Gln113 contribute to the S-adenosyl-L-methionine site; that span reads GGH.

It belongs to the methyltransferase superfamily. RsmH family.

It is found in the cytoplasm. It carries out the reaction cytidine(1402) in 16S rRNA + S-adenosyl-L-methionine = N(4)-methylcytidine(1402) in 16S rRNA + S-adenosyl-L-homocysteine + H(+). Functionally, specifically methylates the N4 position of cytidine in position 1402 (C1402) of 16S rRNA. In Pasteurella multocida (strain Pm70), this protein is Ribosomal RNA small subunit methyltransferase H.